A 495-amino-acid polypeptide reads, in one-letter code: Cytochrome P450 monooxygenase FrzC (495 aa).

The chain crosses the membrane as a helical span at residues 8-28 (GLVVGLWVTYHILLGTYNVFF). C437 provides a ligand contact to heme.

This sequence belongs to the cytochrome P450 family. Requires heme as cofactor.

It is found in the membrane. The catalysed reaction is (S,S)-2,5-di-(p-hydroxybenzyl)piperazine + reduced [NADPH--hemoprotein reductase] + O2 = (1S,4S)-4-[(4-hydroxyphenyl)methyl]-2,5-diazaspiro[bicyclo[3.2.1]octane-6,1'-cyclohexane]-2',5'-dien-4'-one + oxidized [NADPH--hemoprotein reductase] + 2 H2O + H(+). The protein operates within secondary metabolite biosynthesis. Cytochrome P450 monooxygenase; part of the gene cluster that mediates the biosynthesis of the alkaloid (-)-FR901483, a potent immunosuppressant that shows efficacy in animal models and a probable inhibitor of purine nucleotide biosynthesis by targeting phosphoribosylpyrophosphate amidotransferase (PPAT). Within the pathway, FrzC catalyzes the coupling between N10 and C1' to produce a 1,4-diazabicyclo[3.2.1]octane spiro-fused to a 2,5-cyclohexadienone. FrzC probably first catalyzes homolysis of the N-H bond to generate the N10 radical which is followed by an O-H abstraction to give the phenolic radical which can be delocalized to C1'. Radical coupling between N10 and C1' then forms. The biosynthesis of (-)-FR901483 starts with the condensation of two L-tyrosines to yield (S,S)-dityrosyl-piperazine. This process occurs in 3 steps with the non-canonical nonribosomal peptide synthetase FrzA catalyzing the reduction of L-tyrosine into L-tyrosinal, the spontaneous condensation of 2 L-tyrosinal units, and the subsequent reduction by the NmrA-like family domain-containing oxidoreductase FrzB. The cytochrome P450 monooxygenase FrzC then performs coupling between N10 and C1' to morph the piperazine into a 1,4-diazabicyclo[3.2.1]octane spiro-fused to a 2,5-cyclohexadienone. The dienone portion is further reduced to cyclohexanone by the flavin-dependent reductase FrzD. The methyltranserases (MTs) FrzE and FrzF are then involved in the methylation at the C10' amine and the C4 phenolic oxygen, respectively. The order of the two MTs appear to be interchangeable. Cleavage of the C9-N10' bond by the dioxygenase FrzG then leads to formation of a conjugated iminium. In addition to the oxidation of C9, an additional dehydrogenation between C7 and C8 can occur to give a likely shunt product. The next biosynthetic step is the intramolecular aldol condensation catalyzed by the newly identified aldolase FrzH to yield an aza-tricyclic product with the formation of a C9-C3' bond. The short-chain dehydrogenase/reductase FrzI then produces dephospho-(-)-FR901483 that is phosphorylated at C4'-OH into (-)-FR901483 by the phosphotransferase FrzJ. The polypeptide is Cytochrome P450 monooxygenase FrzC (Cladobotryum sp).